The chain runs to 248 residues: Pulmonary surfactant-associated protein A (248 aa).

An N-terminal signal peptide occupies residues 1–17 (MWLRCLALALTLLMVSG). N20 carries N-linked (GlcNAc...) asparagine glycosylation. A Collagen-like domain is found at 28–100 (GNPGIPGTPG…PGERGPPGLP (73 aa)). A disordered region spans residues 29–103 (NPGIPGTPGS…RGPPGLPASL (75 aa)). P30, P33, P36, P42, P54, P57, P63, P67, and P70 each carry 4-hydroxyproline. Residues 42-51 (PGRDGRDGVK) are compositionally biased toward basic and acidic residues. Residues 54 to 65 (PGPPGPLGPPGG) are compositionally biased toward pro residues. Residues 84-93 (ERGEKGEPGE) show a composition bias toward basic and acidic residues. One can recognise a C-type lectin domain in the interval 132–248 (LVVGRKVFSS…LQYRLAICEF (117 aa)). Intrachain disulfides connect C155-C246 and C224-C238. N207 carries N-linked (GlcNAc...) asparagine glycosylation. E215, R217, and N234 together coordinate Ca(2+).

The protein belongs to the SFTPA family. Oligomeric complex of 6 set of homotrimers.

The protein resides in the secreted. It is found in the extracellular space. The protein localises to the extracellular matrix. Its subcellular location is the surface film. In presence of calcium ions, it binds to surfactant phospholipids and contributes to lower the surface tension at the air-liquid interface in the alveoli of the mammalian lung and is essential for normal respiration. Enhances the expression of MYO18A/SP-R210 on alveolar macrophages. The protein is Pulmonary surfactant-associated protein A (SFTPA1) of Canis lupus familiaris (Dog).